Here is a 298-residue protein sequence, read N- to C-terminus: Small ribosomal subunit biogenesis GTPase RsgA (298 aa).

Positions 67–228 constitute a CP-type G domain; the sequence is TNELVRPPIS…IADTPGFSSL (162 aa). Residues 116-119 and 171-179 contribute to the GTP site; these read TKMD and GQSGVGKSS. Zn(2+)-binding residues include Cys252, Cys257, His259, and Cys265.

Belongs to the TRAFAC class YlqF/YawG GTPase family. RsgA subfamily. As to quaternary structure, monomer. Associates with 30S ribosomal subunit, binds 16S rRNA. Requires Zn(2+) as cofactor.

Its subcellular location is the cytoplasm. Its function is as follows. One of several proteins that assist in the late maturation steps of the functional core of the 30S ribosomal subunit. Helps release RbfA from mature subunits. May play a role in the assembly of ribosomal proteins into the subunit. Circularly permuted GTPase that catalyzes slow GTP hydrolysis, GTPase activity is stimulated by the 30S ribosomal subunit. In Bacillus pumilus (strain SAFR-032), this protein is Small ribosomal subunit biogenesis GTPase RsgA.